The following is a 184-amino-acid chain: Tumor necrosis factor receptor superfamily member 17 (184 aa).

Over 1–54 (MLQMAGQCSQNEYFDSLLHACIPCQLRCSSNTPPLTCQRYCNASVTNSVKGTNA) the chain is Extracellular. One copy of the TNFR-Cys repeat lies at 7–41 (QCSQNEYFDSLLHACIPCQLRCSSNTPPLTCQRYC). 3 disulfides stabilise this stretch: Cys-8–Cys-21, Cys-24–Cys-37, and Cys-28–Cys-41. Residues 55-77 (ILWTCLGLSLIISLAVFVLMFLL) form a helical; Signal-anchor for type III membrane protein membrane-spanning segment. The Cytoplasmic segment spans residues 78–184 (RKINSEPLKD…TEIEKSISAR (107 aa)).

In terms of assembly, associates with TRAF1, TRAF2, TRAF3, TRAF5 and TRAF6. In terms of tissue distribution, expressed in mature B-cells, but not in T-cells or monocytes.

It is found in the cell membrane. The protein resides in the endomembrane system. Its function is as follows. Receptor for TNFSF13B/BLyS/BAFF and TNFSF13/APRIL. Promotes B-cell survival and plays a role in the regulation of humoral immunity. Activates NF-kappa-B and JNK. The protein is Tumor necrosis factor receptor superfamily member 17 (TNFRSF17) of Homo sapiens (Human).